We begin with the raw amino-acid sequence, 3072 residues long: Platelet binding protein GspB (3072 aa).

The signal sequence occupies residues 1–85 (MFFKRQKGQY…AVLGGAVVTS (85 aa)). Disordered stretches follow at residues 117-147 (EAAT…SASS), 182-254 (SESL…APNV), 876-909 (SAST…SVSA), 936-969 (SAST…SVSA), 1024-2085 (SASV…SVSA), 2106-2139 (SAST…SVSA), 2173-2223 (VSAS…SVSA), 2250-2595 (SAST…SVSA), 2625-2965 (TSAS…NASV), and 3014-3045 (SQSL…GESE). Residues 118–127 (AATTLSSTEA) are compositionally biased toward polar residues. Residues 123–236 (SSTEANPVES…SSQQSTEASS (114 aa)) form a ser-rich region 1 (SSR1) region. Composition is skewed to low complexity over residues 131 to 147 (ESLS…SASS) and 182 to 238 (SESL…SSQT). The basic region (BR) stretch occupies residues 237–603 (QTGRRRTRRA…GSKFIDTRAG (367 aa)). Residues 604–3028 (SISKSQSTSN…ESQSSSASQS (2425 aa)) form a ser-rich region 2 (SSR2) region. The span at 3014 to 3028 (SQSLSESQSSSASQS) shows a compositional bias: low complexity. Positions 3038 to 3042 (LPRTG) match the LPXTG sorting signal motif. Thr-3041 is subject to Pentaglycyl murein peptidoglycan amidated threonine. Positions 3042–3072 (GESENKASILALGLGALGLAFKKRKKNESED) are cleaved as a propeptide — removed by sortase.

Belongs to the serine-rich repeat protein (SRRP) family. In terms of assembly, both SSR domains in the unglycosylated protein bind to Asp2 and Asp3; glycosylated protein binds less well. Interacts with the human cell surface glycoprotein GP1BA. In terms of processing, proteolytically cleaved by a metalloprotease. Both SSR1 and SSR2 domains are glycosylated. A truncated derivative (residues 1-2062) contains 105 nmol per nmol of protein, suggesting at least 10% of the apparent molecular weight is due to carbohydrates. Glucose and N-acetylglucosamine are present in a ratio of 30:73 residues per truncated polypeptide, as well as minor amounts of galactose and N-acetylgalactosamine. Glycosylation occurs intracellularly in the Ser-rich regions SSR1 and SSR2. Glycosylation of SSR2 domain may be required to prevent aggregation of GspB. It is probable that most of the Ser residues in SSR1 and SSR2 are O-GlcNAcylated. Sequential glycosylation by sugar transferases are able to generate complex sugar polymorphisms.

The protein resides in the secreted. It is found in the cell wall. Functionally, plays a role in virulence and host-pathogen interactions. Mediates binding to human platelets via interaction with the human cell surface glycoprotein GP1BA. Plays a positive role in biofilm formation, possibly by self-association via the basic region (BR). This chain is Platelet binding protein GspB (gspB), found in Streptococcus gordonii.